We begin with the raw amino-acid sequence, 159 residues long: MAETFSSLQDLKSATAAPTQEAPHYVQKLDAQGRAYATGKRKDAVARVWIKPGSGKVVVNGRAVEVYFARPVLRMILQQPLGVAKRVDQYDLTVTVAGGGLSGQAGAVRHGLSKALVAFEPELRGVLKKEGFLTRDSRVVERKKYGKKKARRSFQFSKR.

This sequence belongs to the universal ribosomal protein uS9 family.

The protein is Small ribosomal subunit protein uS9 of Methylocella silvestris (strain DSM 15510 / CIP 108128 / LMG 27833 / NCIMB 13906 / BL2).